The primary structure comprises 524 residues: Phosphoenolpyruvate carboxykinase (ATP) (524 aa).

The substrate site is built by Arg52, Tyr188, and Lys194. ATP contacts are provided by residues Lys194, His213, and 229–237 (GLSGTGKTT). Mn(2+)-binding residues include Lys194 and His213. Asp250 serves as a coordination point for Mn(2+). Positions 278, 314, and 439 each coordinate ATP. Arg314 lines the substrate pocket.

Belongs to the phosphoenolpyruvate carboxykinase (ATP) family. It depends on Mn(2+) as a cofactor.

It is found in the cytoplasm. The catalysed reaction is oxaloacetate + ATP = phosphoenolpyruvate + ADP + CO2. The protein operates within carbohydrate biosynthesis; gluconeogenesis. Functionally, involved in the gluconeogenesis. Catalyzes the conversion of oxaloacetate (OAA) to phosphoenolpyruvate (PEP) through direct phosphoryl transfer between the nucleoside triphosphate and OAA. The polypeptide is Phosphoenolpyruvate carboxykinase (ATP) (Campylobacter jejuni subsp. jejuni serotype O:2 (strain ATCC 700819 / NCTC 11168)).